Consider the following 279-residue polypeptide: Tryptophan synthase alpha chain (279 aa).

Active-site proton acceptor residues include glutamate 50 and aspartate 61.

Belongs to the TrpA family. In terms of assembly, tetramer of two alpha and two beta chains.

It carries out the reaction (1S,2R)-1-C-(indol-3-yl)glycerol 3-phosphate + L-serine = D-glyceraldehyde 3-phosphate + L-tryptophan + H2O. Its pathway is amino-acid biosynthesis; L-tryptophan biosynthesis; L-tryptophan from chorismate: step 5/5. Functionally, the alpha subunit is responsible for the aldol cleavage of indoleglycerol phosphate to indole and glyceraldehyde 3-phosphate. In Mesorhizobium japonicum (strain LMG 29417 / CECT 9101 / MAFF 303099) (Mesorhizobium loti (strain MAFF 303099)), this protein is Tryptophan synthase alpha chain.